We begin with the raw amino-acid sequence, 435 residues long: Light-independent protochlorophyllide reductase subunit N (435 aa).

3 residues coordinate [4Fe-4S] cluster: C23, C48, and C108.

The protein belongs to the BchN/ChlN family. As to quaternary structure, protochlorophyllide reductase is composed of three subunits; ChlL, ChlN and ChlB. Forms a heterotetramer of two ChlB and two ChlN subunits. The cofactor is [4Fe-4S] cluster.

Its subcellular location is the plastid. The protein resides in the chloroplast. The enzyme catalyses chlorophyllide a + oxidized 2[4Fe-4S]-[ferredoxin] + 2 ADP + 2 phosphate = protochlorophyllide a + reduced 2[4Fe-4S]-[ferredoxin] + 2 ATP + 2 H2O. Its pathway is porphyrin-containing compound metabolism; chlorophyll biosynthesis (light-independent). Functionally, component of the dark-operative protochlorophyllide reductase (DPOR) that uses Mg-ATP and reduced ferredoxin to reduce ring D of protochlorophyllide (Pchlide) to form chlorophyllide a (Chlide). This reaction is light-independent. The NB-protein (ChlN-ChlB) is the catalytic component of the complex. This chain is Light-independent protochlorophyllide reductase subunit N, found in Auxenochlorella protothecoides (Green microalga).